We begin with the raw amino-acid sequence, 305 residues long: UDP-3-O-acyl-N-acetylglucosamine deacetylase (305 aa).

The Zn(2+) site is built by His-79, His-238, and Asp-242. The active-site Proton donor is the His-265.

It belongs to the LpxC family. Requires Zn(2+) as cofactor.

It carries out the reaction a UDP-3-O-[(3R)-3-hydroxyacyl]-N-acetyl-alpha-D-glucosamine + H2O = a UDP-3-O-[(3R)-3-hydroxyacyl]-alpha-D-glucosamine + acetate. Its pathway is glycolipid biosynthesis; lipid IV(A) biosynthesis; lipid IV(A) from (3R)-3-hydroxytetradecanoyl-[acyl-carrier-protein] and UDP-N-acetyl-alpha-D-glucosamine: step 2/6. Functionally, catalyzes the hydrolysis of UDP-3-O-myristoyl-N-acetylglucosamine to form UDP-3-O-myristoylglucosamine and acetate, the committed step in lipid A biosynthesis. This chain is UDP-3-O-acyl-N-acetylglucosamine deacetylase, found in Mannheimia succiniciproducens (strain KCTC 0769BP / MBEL55E).